The primary structure comprises 990 residues: Tyrosine-protein phosphatase 3 (990 aa).

Disordered regions lie at residues glutamine 47–valine 88, asparagine 100–glutamate 193, proline 246–glutamine 414, and lysine 431–leucine 452. 2 stretches are compositionally biased toward low complexity: residues asparagine 52–valine 88 and asparagine 100–asparagine 117. The segment covering leucine 127–lysine 136 has biased composition (polar residues). 5 stretches are compositionally biased toward low complexity: residues asparagine 137–asparagine 191, serine 250–leucine 271, asparagine 278–asparagine 293, glutamine 310–glutamine 327, and asparagine 334–serine 413. The Tyrosine-protein phosphatase domain occupies methionine 422–valine 715. The segment covering lysine 437–tyrosine 447 has biased composition (basic residues). The active-site Phosphocysteine intermediate is the cysteine 650. Over residues proline 786 to phenylalanine 795 the composition is skewed to polar residues. Disordered stretches follow at residues proline 786–isoleucine 814 and leucine 834–phenylalanine 990. Composition is skewed to low complexity over residues serine 796–proline 806 and leucine 834–proline 850. The segment covering leucine 851 to serine 868 has biased composition (polar residues). Low complexity-rich tracts occupy residues asparagine 878–glycine 916 and glycine 924–asparagine 968.

Belongs to the protein-tyrosine phosphatase family. Non-receptor class subfamily. In terms of tissue distribution, in the anterior-like and prestalk cell types.

The protein resides in the cytoplasm. The enzyme catalyses O-phospho-L-tyrosyl-[protein] + H2O = L-tyrosyl-[protein] + phosphate. Functionally, seems to dephosphorylate a protein of 130 kDa (p130). The protein is Tyrosine-protein phosphatase 3 (ptpC) of Dictyostelium discoideum (Social amoeba).